A 221-amino-acid chain; its full sequence is Telomere repeats-binding bouquet formation protein 2 (221 aa).

This sequence belongs to the TERB2 family. As to quaternary structure, component of the MAJIN-TERB1-TERB2 complex, composed of MAJIN, TERB1 and TERB2.

The protein resides in the chromosome. It localises to the telomere. Its subcellular location is the nucleus inner membrane. In terms of biological role, meiosis-specific telomere-associated protein involved in meiotic telomere attachment to the nucleus inner membrane, a crucial step for homologous pairing and synapsis. Component of the MAJIN-TERB1-TERB2 complex, which promotes telomere cap exchange by mediating attachment of telomeric DNA to the inner nuclear membrane and replacement of the protective cap of telomeric chromosomes: in early meiosis, the MAJIN-TERB1-TERB2 complex associates with telomeric DNA and the shelterin/telosome complex. During prophase, the complex matures and promotes release of the shelterin/telosome complex from telomeric DNA. The polypeptide is Telomere repeats-binding bouquet formation protein 2 (Bos taurus (Bovine)).